Consider the following 25-residue polypeptide: Dermaseptin-DI5 (25 aa).

This sequence belongs to the frog skin active peptide (FSAP) family. Dermaseptin subfamily. Expressed by the skin glands.

Its subcellular location is the secreted. In terms of biological role, antibacterial peptide with activity against Gram-positive bacteria S.aureus and E.faecalis, and Gram-negative bacteria P.aeruginosa and E.coli. The protein is Dermaseptin-DI5 of Phyllomedusa distincta (Monkey frog).